We begin with the raw amino-acid sequence, 406 residues long: Zinc finger CCCH domain-containing protein 15 homolog (406 aa).

Low complexity predominate over residues 1–11 (MPPKKAPAGPS). A disordered region spans residues 1–70 (MPPKKAPAGP…DKKKDEKEKK (70 aa)). The span at 12–28 (KKTEQKKKEKVIEDKTF) shows a compositional bias: basic and acidic residues. Positions 38 to 50 (QQKFIQQVQKQVQ) are enriched in low complexity. The segment covering 56-70 (PRQDGDKKKDEKEKK) has biased composition (basic and acidic residues). Positions 57-82 (RQDGDKKKDEKEKKLADLREMASIFK) form a coiled coil. 2 consecutive C3H1-type zinc fingers follow at residues 94-121 (DPKS…HDLS) and 166-203 (PTTE…HALP). The interval 336-382 (VDGSGTIASSTRLLDQATEAAKTAAAEDGAASDDENPSSSAPANDAA) is disordered. Low complexity-rich tracts occupy residues 352-364 (ATEA…AEDG) and 372-382 (PSSSAPANDAA).

The protein belongs to the ZC3H15/TMA46 family.

This Drosophila pseudoobscura pseudoobscura (Fruit fly) protein is Zinc finger CCCH domain-containing protein 15 homolog.